Consider the following 121-residue polypeptide: Neuromedin-B (121 aa).

The N-terminal stretch at 1-24 is a signal peptide; the sequence is MTLRAVGVRLLGGLLLFALLAAGA. A Methionine amide modification is found at M56. Residues 60–121 constitute a propeptide that is removed on maturation; it reads SLEPPSPSLL…RRLLVQTLQK (62 aa). Residues 61 to 80 are disordered; it reads LEPPSPSLLGTAPHTSLRDQ.

Belongs to the bombesin/neuromedin-B/ranatensin family.

The protein localises to the secreted. The protein resides in the cell projection. It is found in the neuron projection. Stimulates smooth muscle contraction. Induces sighing by acting directly on the pre-Botzinger complex, a cluster of several thousand neurons in the ventrolateral medulla responsible for inspiration during respiratory activity. Contributes to the induction of sneezing following exposure to chemical irritants or allergens which causes release of NMB by nasal sensory neurons and activation of NMBR-expressing neurons in the sneeze-evoking region of the brainstem. These in turn activate neurons of the caudal ventral respiratory group, giving rise to the sneezing response. Contributes to induction of acute itch, possibly through activation of the NMBR receptor on dorsal root ganglion neurons. Increases expression of NMBR and steroidogenic mediators STAR, CYP11A1 and HSD3B1 in Leydig cells, induces secretion of testosterone by Leydig cells and also promotes Leydig cell proliferation. Plays a role in the innate immune response to influenza A virus infection by enhancing interferon alpha expression and reducing expression of IL6. Plays a role in CSF1-induced proliferation of osteoclast precursors by contributing to the positive regulation of the expression of the CSF1 receptor CSF1R. The sequence is that of Neuromedin-B (NMB) from Bos taurus (Bovine).